Consider the following 314-residue polypeptide: MANLKRIRDRIKAVKNTRKITEAMRLVAAARVRRAQEQVMATRPFADRLAQVFYRLQTRLRLEDVNLPLLKQRPIQTVGLLVVAGDRGLCGAYNANVIKRTEERVRELQETGQQVQLYLVGRKAVQYFQRRSAPIAKTYVNLSQIPTAAEAAQIGDQLLAAFLSEKVDKVELLYTRFVSLISSRPVVQSLLPLDPSRLATQDDEIFRLLVRGGEFTVERSKVIAAVSAPPQDMIFEQDPVQILDALLPLYLNNQLLRALQEAAASELAARMTAMNNASDNASELIRTLGLAYNKARQAAITQEILEVVAGAEAL.

It belongs to the ATPase gamma chain family. As to quaternary structure, F-type ATPases have 2 components, CF(1) - the catalytic core - and CF(0) - the membrane proton channel. CF(1) has five subunits: alpha(3), beta(3), gamma(1), delta(1), epsilon(1). CF(0) has three main subunits: a, b and c.

Its subcellular location is the cellular thylakoid membrane. Its function is as follows. Produces ATP from ADP in the presence of a proton gradient across the membrane. The gamma chain is believed to be important in regulating ATPase activity and the flow of protons through the CF(0) complex. This chain is ATP synthase gamma chain, found in Synechococcus sp. (strain JA-2-3B'a(2-13)) (Cyanobacteria bacterium Yellowstone B-Prime).